The primary structure comprises 512 residues: ATP synthase subunit alpha 2 (512 aa).

169–176 (GDRQTGKT) serves as a coordination point for ATP.

It belongs to the ATPase alpha/beta chains family. In terms of assembly, F-type ATPases have 2 components, CF(1) - the catalytic core - and CF(0) - the membrane proton channel. CF(1) has five subunits: alpha(3), beta(3), gamma(1), delta(1), epsilon(1). CF(0) has four main subunits: a(1), b(1), b'(1) and c(9-12).

Its subcellular location is the cell inner membrane. It carries out the reaction ATP + H2O + 4 H(+)(in) = ADP + phosphate + 5 H(+)(out). In terms of biological role, produces ATP from ADP in the presence of a proton gradient across the membrane. The alpha chain is a regulatory subunit. In Dinoroseobacter shibae (strain DSM 16493 / NCIMB 14021 / DFL 12), this protein is ATP synthase subunit alpha 2.